Consider the following 160-residue polypeptide: Putative antiporter subunit mnhE2 (160 aa).

The next 3 helical transmembrane spans lie at 22 to 42, 61 to 81, and 102 to 122; these read SFQF…IYIL, FLGV…NYIL, and WAIT…VIRI.

Belongs to the CPA3 antiporters (TC 2.A.63) subunit E family. As to quaternary structure, may form a heterooligomeric complex that consists of seven subunits: mnhA2, mnhB2, mnhC2, mnhD2, mnhE2, mnhF2 and mnhG2.

The protein resides in the cell membrane. The protein is Putative antiporter subunit mnhE2 (mnhE2) of Staphylococcus haemolyticus (strain JCSC1435).